A 534-amino-acid polypeptide reads, in one-letter code: Membrane protein insertase YidC (534 aa).

The next 5 membrane-spanning stretches (helical) occupy residues 7–27, 319–339, 342–362, 413–433, and 493–513; these read IIAV…SEYM, AIDL…LDFF, YVGN…LVFW, GGCL…QALL, and VMMF…SGLV.

Belongs to the OXA1/ALB3/YidC family. Type 1 subfamily. In terms of assembly, interacts with the Sec translocase complex via SecD. Specifically interacts with transmembrane segments of nascent integral membrane proteins during membrane integration.

The protein resides in the cell inner membrane. Required for the insertion and/or proper folding and/or complex formation of integral membrane proteins into the membrane. Involved in integration of membrane proteins that insert both dependently and independently of the Sec translocase complex, as well as at least some lipoproteins. Aids folding of multispanning membrane proteins. The sequence is that of Membrane protein insertase YidC from Nitratidesulfovibrio vulgaris (strain ATCC 29579 / DSM 644 / CCUG 34227 / NCIMB 8303 / VKM B-1760 / Hildenborough) (Desulfovibrio vulgaris).